A 315-amino-acid chain; its full sequence is Ribose-phosphate pyrophosphokinase (315 aa).

ATP contacts are provided by residues 37–39 and 96–97; these read DSE and RQ. Mg(2+) contacts are provided by His-131 and Asp-170. The active site involves Lys-194. D-ribose 5-phosphate is bound by residues Arg-196, Asp-220, and 224–228; that span reads DTGGT.

The protein belongs to the ribose-phosphate pyrophosphokinase family. Class I subfamily. In terms of assembly, homohexamer. The cofactor is Mg(2+).

The protein localises to the cytoplasm. It catalyses the reaction D-ribose 5-phosphate + ATP = 5-phospho-alpha-D-ribose 1-diphosphate + AMP + H(+). Its pathway is metabolic intermediate biosynthesis; 5-phospho-alpha-D-ribose 1-diphosphate biosynthesis; 5-phospho-alpha-D-ribose 1-diphosphate from D-ribose 5-phosphate (route I): step 1/1. In terms of biological role, involved in the biosynthesis of the central metabolite phospho-alpha-D-ribosyl-1-pyrophosphate (PRPP) via the transfer of pyrophosphoryl group from ATP to 1-hydroxyl of ribose-5-phosphate (Rib-5-P). This Marinomonas sp. (strain MWYL1) protein is Ribose-phosphate pyrophosphokinase.